A 446-amino-acid chain; its full sequence is Nitrate/nitrite binding protein NrtA (446 aa).

The first 28 residues, 1-28 (MSNFSRSTRRKFMFTAGAAAIGGVVLHG), serve as a signal peptide directing secretion. Cys29 carries N-palmitoyl cysteine lipidation. Cys29 carries S-diacylglycerol cysteine lipidation. Nitrate-binding residues include Trp102, Gln155, His196, Gly240, and Lys269.

The protein belongs to the CmpA/NrtA family. In terms of assembly, the complex is composed of two ATP-binding proteins (NrtC and NrtD), two transmembrane proteins (NrtB) and a solute-binding protein (NrtA).

It is found in the cell inner membrane. Part of the ABC transporter complex NrtABCD involved in nitrate uptake. The complex is probably also involved in nitrite transport. NrtA is the substrate-binding protein. Binds nitrate. The sequence is that of Nitrate/nitrite binding protein NrtA from Synechocystis sp. (strain ATCC 27184 / PCC 6803 / Kazusa).